The sequence spans 657 residues: Translation factor GUF1, mitochondrial (657 aa).

The N-terminal 39 residues, 1 to 39 (MRGCLQSVKWLTSALRPSQSLASSTRYPRRLLSTSAPRN), are a transit peptide targeting the mitochondrion. The region spanning 59–239 (ERFRNFCIVA…TVIEQIPAPV (181 aa)) is the tr-type G domain. GTP is bound by residues 109 to 116 (TVKAQTCS), 173 to 177 (LAFAE), and 227 to 230 (LLPT).

Belongs to the TRAFAC class translation factor GTPase superfamily. Classic translation factor GTPase family. LepA subfamily.

It localises to the mitochondrion inner membrane. The catalysed reaction is GTP + H2O = GDP + phosphate + H(+). In terms of biological role, promotes mitochondrial protein synthesis. May act as a fidelity factor of the translation reaction, by catalyzing a one-codon backward translocation of tRNAs on improperly translocated ribosomes. Binds to mitochondrial ribosomes in a GTP-dependent manner. The sequence is that of Translation factor GUF1, mitochondrial from Ajellomyces capsulatus (strain NAm1 / WU24) (Darling's disease fungus).